Reading from the N-terminus, the 447-residue chain is Phosphoglucosamine mutase (447 aa).

S108 (phosphoserine intermediate) is an active-site residue. Residues S108, D247, D249, and D251 each coordinate Mg(2+). The residue at position 108 (S108) is a Phosphoserine.

Belongs to the phosphohexose mutase family. The cofactor is Mg(2+). Activated by phosphorylation.

The enzyme catalyses alpha-D-glucosamine 1-phosphate = D-glucosamine 6-phosphate. Its function is as follows. Catalyzes the conversion of glucosamine-6-phosphate to glucosamine-1-phosphate. This Bordetella petrii (strain ATCC BAA-461 / DSM 12804 / CCUG 43448) protein is Phosphoglucosamine mutase.